The primary structure comprises 119 residues: Large ribosomal subunit protein bL20 (119 aa).

This sequence belongs to the bacterial ribosomal protein bL20 family.

In terms of biological role, binds directly to 23S ribosomal RNA and is necessary for the in vitro assembly process of the 50S ribosomal subunit. It is not involved in the protein synthesizing functions of that subunit. This chain is Large ribosomal subunit protein bL20, found in Bradyrhizobium sp. (strain BTAi1 / ATCC BAA-1182).